The sequence spans 274 residues: tRNA (guanine-N(1)-)-methyltransferase (274 aa).

Residues Gly-116 and 140-145 each bind S-adenosyl-L-methionine; that span reads LGDYVL.

This sequence belongs to the RNA methyltransferase TrmD family. In terms of assembly, homodimer.

The protein resides in the cytoplasm. The catalysed reaction is guanosine(37) in tRNA + S-adenosyl-L-methionine = N(1)-methylguanosine(37) in tRNA + S-adenosyl-L-homocysteine + H(+). Its function is as follows. Specifically methylates guanosine-37 in various tRNAs. In Arthrobacter sp. (strain FB24), this protein is tRNA (guanine-N(1)-)-methyltransferase.